Consider the following 233-residue polypeptide: Octanoyltransferase (233 aa).

Residues 38-218 (AGGPDTLLLL…AVCDALDGVL (181 aa)) form the BPL/LPL catalytic domain. The span at 57 to 66 (RRTEPHERPL) shows a compositional bias: basic and acidic residues. Residues 57–77 (RRTEPHERPLDGTPVVDTDRG) are disordered. Substrate contacts are provided by residues 76 to 83 (RGGKITWH), 148 to 150 (AIG), and 161 to 163 (GFA). The Acyl-thioester intermediate role is filled by Cys-179.

The protein belongs to the LipB family.

The protein localises to the cytoplasm. The enzyme catalyses octanoyl-[ACP] + L-lysyl-[protein] = N(6)-octanoyl-L-lysyl-[protein] + holo-[ACP] + H(+). The protein operates within protein modification; protein lipoylation via endogenous pathway; protein N(6)-(lipoyl)lysine from octanoyl-[acyl-carrier-protein]: step 1/2. Its function is as follows. Catalyzes the transfer of endogenously produced octanoic acid from octanoyl-acyl-carrier-protein onto the lipoyl domains of lipoate-dependent enzymes. Lipoyl-ACP can also act as a substrate although octanoyl-ACP is likely to be the physiological substrate. The protein is Octanoyltransferase of Mycolicibacterium paratuberculosis (strain ATCC BAA-968 / K-10) (Mycobacterium paratuberculosis).